We begin with the raw amino-acid sequence, 309 residues long: Taste receptor type 2 member 46 (309 aa).

Position 1 (methionine 1) is a topological domain, extracellular. Residues 2-22 (ITFLPIIFSILIVVTFVIGNF) form a helical membrane-spanning segment. The Cytoplasmic portion of the chain corresponds to 23-46 (ANGFIALANSIEWFKRQKISFADQ). The chain crosses the membrane as a helical span at residues 47–67 (ILTALAVSRVGLLWVLLLNWY). Residues 68–86 (ATELNPAFYSIEVRITAYN) lie on the Extracellular side of the membrane. The chain crosses the membrane as a helical span at residues 87–107 (LWAVINHFSNWLATSLSIFYL). Residues 108–126 (LKIANFSNLIFLRLKRRVK) lie on the Cytoplasmic side of the membrane. The chain crosses the membrane as a helical span at residues 127-147 (SVVLVILLGPLLFLVCHLFVI). The Extracellular segment spans residues 148 to 178 (NMNQIIWTKEYEGNMTWKIKLRSAMYLSNIT). N-linked (GlcNAc...) asparagine glycans are attached at residues asparagine 161 and asparagine 176. A helical transmembrane segment spans residues 179 to 199 (VTILANLVPFTLTLISFLLLI). At 200-229 (CSLCKHLKKMQLHGKGSQDPSMKVHIKALQ) the chain is on the cytoplasmic side. A helical transmembrane segment spans residues 230-250 (TVTSFLLLCAIYFLSIIMSVW). The Extracellular portion of the chain corresponds to 251–259 (SFESLENKP). A helical membrane pass occupies residues 260-280 (VFMFCEAITFSYPSTHPFILI). The Cytoplasmic segment spans residues 281–309 (WGNKKLKQTFLSVLWHVRYWVKGEEPSSP).

Belongs to the G-protein coupled receptor T2R family.

It is found in the membrane. The protein resides in the cell projection. Its subcellular location is the cilium membrane. Receptor that may play a role in the perception of bitterness and is gustducin-linked. May play a role in sensing the chemical composition of the gastrointestinal content. The activity of this receptor may stimulate alpha gustducin, mediate PLC-beta-2 activation and lead to the gating of TRPM5. In airway epithelial cells, binding of bitter compounds increases the intracellular calcium ion concentration and stimulates ciliary beat frequency. The polypeptide is Taste receptor type 2 member 46 (TAS2R46) (Pan paniscus (Pygmy chimpanzee)).